A 168-amino-acid polypeptide reads, in one-letter code: S-ribosylhomocysteine lyase (168 aa).

Residues His54, His58, and Cys128 each contribute to the Fe cation site.

This sequence belongs to the LuxS family. In terms of assembly, homodimer. The cofactor is Fe cation.

It carries out the reaction S-(5-deoxy-D-ribos-5-yl)-L-homocysteine = (S)-4,5-dihydroxypentane-2,3-dione + L-homocysteine. Involved in the synthesis of autoinducer 2 (AI-2) which is secreted by bacteria and is used to communicate both the cell density and the metabolic potential of the environment. The regulation of gene expression in response to changes in cell density is called quorum sensing. Catalyzes the transformation of S-ribosylhomocysteine (RHC) to homocysteine (HC) and 4,5-dihydroxy-2,3-pentadione (DPD). The chain is S-ribosylhomocysteine lyase from Neisseria meningitidis serogroup C (strain 053442).